The chain runs to 228 residues: Cytidylate kinase (228 aa).

11–19 (GPASAGKST) serves as a coordination point for ATP.

The protein belongs to the cytidylate kinase family. Type 1 subfamily.

It localises to the cytoplasm. It carries out the reaction CMP + ATP = CDP + ADP. The catalysed reaction is dCMP + ATP = dCDP + ADP. The chain is Cytidylate kinase from Limosilactobacillus reuteri (strain DSM 20016) (Lactobacillus reuteri).